Here is a 380-residue protein sequence, read N- to C-terminus: Glucose-1-phosphate adenylyltransferase (380 aa).

Alpha-D-glucose 1-phosphate contacts are provided by residues Gly-164, 179–180 (EK), and Ser-190.

The protein belongs to the bacterial/plant glucose-1-phosphate adenylyltransferase family. Homotetramer.

It carries out the reaction alpha-D-glucose 1-phosphate + ATP + H(+) = ADP-alpha-D-glucose + diphosphate. Its pathway is glycan biosynthesis; glycogen biosynthesis. Functionally, involved in the biosynthesis of ADP-glucose, a building block required for the elongation reactions to produce glycogen. Catalyzes the reaction between ATP and alpha-D-glucose 1-phosphate (G1P) to produce pyrophosphate and ADP-Glc. This Streptococcus gordonii (strain Challis / ATCC 35105 / BCRC 15272 / CH1 / DL1 / V288) protein is Glucose-1-phosphate adenylyltransferase.